Here is a 465-residue protein sequence, read N- to C-terminus: Chromosomal replication initiator protein DnaA (465 aa).

Residues 1–80 (MLWTDCLTRL…VEILVDSRPG (80 aa)) are domain I, interacts with DnaA modulators. The segment at 80-127 (GAILSPAEQPATTTAALSSTPVVPQRVKKEVVEPAATQSNKILNSKKR) is domain II. Residues 128–345 (LLNPLFTFSL…GALNKVVAIA (218 aa)) are domain III, AAA+ region. Positions 173, 175, 176, and 177 each coordinate ATP. The tract at residues 346–465 (RFKGSQIDLD…YKNLLRLLQS (120 aa)) is domain IV, binds dsDNA.

Belongs to the DnaA family. As to quaternary structure, oligomerizes as a right-handed, spiral filament on DNA at oriC.

It localises to the cytoplasm. Its function is as follows. Plays an essential role in the initiation and regulation of chromosomal replication. ATP-DnaA binds to the origin of replication (oriC) to initiate formation of the DNA replication initiation complex once per cell cycle. Binds the DnaA box (a 9 base pair repeat at the origin) and separates the double-stranded (ds)DNA. Forms a right-handed helical filament on oriC DNA; dsDNA binds to the exterior of the filament while single-stranded (ss)DNA is stabiized in the filament's interior. The ATP-DnaA-oriC complex binds and stabilizes one strand of the AT-rich DNA unwinding element (DUE), permitting loading of DNA polymerase. After initiation quickly degrades to an ADP-DnaA complex that is not apt for DNA replication. Binds acidic phospholipids. This chain is Chromosomal replication initiator protein DnaA, found in Acinetobacter baylyi (strain ATCC 33305 / BD413 / ADP1).